Here is a 660-residue protein sequence, read N- to C-terminus: Tripartite terminase subunit 3 (660 aa).

Residues V203–T210 carry the Walker A motif motif. The Walker B motif motif lies at I294 to E299. Catalysis depends on E299, which acts as the For ATPase activity. Catalysis depends on for nuclease activity residues D452, E523, and D637.

The protein belongs to the herpesviridae TRM3 protein family. In terms of assembly, interacts with the terminase subunits TRM1 and TRM2. Interacts with portal protein.

The protein resides in the host nucleus. Its function is as follows. Component of the molecular motor that translocates viral genomic DNA in empty capsid during DNA packaging. Forms a tripartite terminase complex together with TRM1 and TRM2 in the host cytoplasm. Once the complex reaches the host nucleus, it interacts with the capsid portal vertex. This portal forms a ring in which genomic DNA is translocated into the capsid. TRM3 carries an RNase H-like nuclease activity that plays an important role for the cleavage of concatemeric viral DNA into unit length genomes. This is Tripartite terminase subunit 3 from Elephas maximus (Indian elephant).